Reading from the N-terminus, the 915-residue chain is MSDFWDKNKGSIASGFKSAGKYTYQGAKYVGKSGYNASKNHYNKSKEQRDKRDKKKGKKKNGDDEYSGDDSYSDDDSSYSTASIPVSSMKDPNSFPPPPLKPQQVQATSSSHSVEQYPASAGVPQQQLRQLPPQPISATQQPAWPQQPAANQYDGQVSAPDQSQMQYGGQTQYQQPPAMQQPPAMQQHPAMQQPPDMQQPPDMQQPPAMQQPPAMQQPPAMQQPPAMQQPPAMQQPPAMQQPPAMQQPPNMVGQPSNQFQLPEPQQRQTPPLPPVTSQPYGEAQNQAQNQGQFQATPLSQLQNMQQEETTRSVPNAYDPQQTYSQPPSIPQRHTPQPVVNQVQYQESQSSIPQVNQDYYGQQPEVNQQNNLMNRSIPPPMQQQPPMQQQPPMQQQPPMQQQPPMQQQPPMPPRGPSLAAPAYGGTPNINANAQLPASSGITVKPYNPDEVQTREPLALKVDIGNLPPPPTHRDRGTETRPPSEPKPSPAIRNPISAVPAVSRASTLDSSSVPVNSIPAHQNQPIYMQDNSSSVESFPDEETSDFNNLPPPPPPNRRVTEQNLEKSAKSSTIGQEQRNDSKTEPPRAAIVGSFNSNPTINFEPPPKPFRPVVNSDRKSESPVQPQPLARSANGPPALPSRRGTQTSFESHPTPPSMESSTPSLPNRLNRNEPPIAEKPVSSFPPPPKPFRRVEAESPSHSQVNDSNKESSAPRTHNFGNDEDEDISAPVKWNPPAELLERKSEIDVKKGKKAPPPVVKPKPKNLSSVNKVNPEYEGHKPVGSMNQNQNQNQNQNSLNSITDELTHVHLRKTGISLEDEGKKFGGNDTSIDDIPPKFEKIETSRKPKAPPAVPKKKDSIRGAPPPVPAKKKNLNATPQPPPSRRNNNVNNDNDDDDSNPFEKYMRDAVPAEENRLRK.

Positions 30 to 915 are disordered; sequence VGKSGYNASK…VPAEENRLRK (886 aa). A compositionally biased stretch (acidic residues) spans 64–77; it reads DEYSGDDSYSDDDS. A compositionally biased stretch (polar residues) spans 103–114; the sequence is QQVQATSSSHSV. Low complexity-rich tracts occupy residues 140–152 and 162–249; these read QQPAWPQQPAANQ and QSQM…QQPP. A compositionally biased stretch (polar residues) spans 253–269; the sequence is GQPSNQFQLPEPQQRQT. Positions 283–295 are enriched in low complexity; that stretch reads AQNQAQNQGQFQA. Residues 296–373 show a composition bias toward polar residues; sequence TPLSQLQNMQ…EVNQQNNLMN (78 aa). Residues 383 to 404 are compositionally biased toward low complexity; that stretch reads QPPMQQQPPMQQQPPMQQQPPM. Positions 405–414 are enriched in pro residues; that stretch reads QQQPPMPPRG. Polar residues predominate over residues 426–440; sequence PNINANAQLPASSGI. The segment covering 470–482 has biased composition (basic and acidic residues); sequence THRDRGTETRPPS. The segment covering 502 to 534 has biased composition (polar residues); it reads RASTLDSSSVPVNSIPAHQNQPIYMQDNSSSVE. The segment covering 556–566 has biased composition (basic and acidic residues); sequence RVTEQNLEKSA. Positions 654–663 are enriched in low complexity; it reads SMESSTPSLP. Residues 696 to 716 show a composition bias toward polar residues; that stretch reads PSHSQVNDSNKESSAPRTHNF. A compositionally biased stretch (basic and acidic residues) spans 736–746; the sequence is LLERKSEIDVK. A compositionally biased stretch (low complexity) spans 783 to 793; it reads NQNQNQNQNQN. A compositionally biased stretch (basic and acidic residues) spans 831-842; sequence IPPKFEKIETSR.

It belongs to the AIM3 family.

The protein localises to the membrane raft. The protein is Altered inheritance of mitochondria protein 3 (AIM3) of Vanderwaltozyma polyspora (strain ATCC 22028 / DSM 70294 / BCRC 21397 / CBS 2163 / NBRC 10782 / NRRL Y-8283 / UCD 57-17) (Kluyveromyces polysporus).